The sequence spans 418 residues: Tyrosine--tRNA ligase (418 aa).

Tyr34 serves as a coordination point for L-tyrosine. The short motif at Pro39–His48 is the 'HIGH' region element. Residues Tyr169 and Gln173 each coordinate L-tyrosine. Positions Lys229–Ser233 match the 'KMSKS' region motif. Lys232 is a binding site for ATP. The S4 RNA-binding domain maps to Leu352–Lys410.

Belongs to the class-I aminoacyl-tRNA synthetase family. TyrS type 1 subfamily. In terms of assembly, homodimer.

It is found in the cytoplasm. It catalyses the reaction tRNA(Tyr) + L-tyrosine + ATP = L-tyrosyl-tRNA(Tyr) + AMP + diphosphate + H(+). Catalyzes the attachment of tyrosine to tRNA(Tyr) in a two-step reaction: tyrosine is first activated by ATP to form Tyr-AMP and then transferred to the acceptor end of tRNA(Tyr). The sequence is that of Tyrosine--tRNA ligase from Streptococcus suis (strain 98HAH33).